The following is a 117-amino-acid chain: Prefoldin subunit beta (117 aa).

Belongs to the prefoldin subunit beta family. As to quaternary structure, heterohexamer of two alpha and four beta subunits.

It localises to the cytoplasm. Its function is as follows. Molecular chaperone capable of stabilizing a range of proteins. Seems to fulfill an ATP-independent, HSP70-like function in archaeal de novo protein folding. This Methanosarcina barkeri (strain Fusaro / DSM 804) protein is Prefoldin subunit beta.